Reading from the N-terminus, the 392-residue chain is Branched-chain-amino-acid aminotransferase, mitochondrial (392 aa).

A mitochondrion-targeting transit peptide spans 1-27 (MAAAALGQIWARKLLSVPWLLCGPRRY). Substrate is bound at residue Y168. Residue K229 is modified to N6-(pyridoxal phosphate)lysine. Position 321 is an N6-acetyllysine (K321).

The protein belongs to the class-IV pyridoxal-phosphate-dependent aminotransferase family. Homodimer. Pyridoxal 5'-phosphate serves as cofactor. As to expression, ubiquitous.

The protein resides in the mitochondrion. The enzyme catalyses L-leucine + 2-oxoglutarate = 4-methyl-2-oxopentanoate + L-glutamate. It catalyses the reaction L-isoleucine + 2-oxoglutarate = (S)-3-methyl-2-oxopentanoate + L-glutamate. The catalysed reaction is L-valine + 2-oxoglutarate = 3-methyl-2-oxobutanoate + L-glutamate. In terms of biological role, catalyzes the first reaction in the catabolism of the essential branched chain amino acids leucine, isoleucine, and valine. May also function as a transporter of branched chain alpha-keto acids. This chain is Branched-chain-amino-acid aminotransferase, mitochondrial (BCAT2), found in Homo sapiens (Human).